A 259-amino-acid polypeptide reads, in one-letter code: UPF0246 protein Avin_11220 (259 aa).

This sequence belongs to the UPF0246 family.

The protein is UPF0246 protein Avin_11220 of Azotobacter vinelandii (strain DJ / ATCC BAA-1303).